The primary structure comprises 266 residues: Ribonuclease 3 (266 aa).

The tract at residues 1–35 (MMDESADIKPVPTSEDVAAPSGTEPVAPAPKKKRA) is disordered. Residues 43–171 (MAAIEQRLGH…VIGAVYLDGG (129 aa)) form the RNase III domain. Glutamate 84 provides a ligand contact to Mg(2+). Aspartate 88 is a catalytic residue. Mg(2+) is bound by residues aspartate 157 and glutamate 160. The active site involves glutamate 160. The DRBM domain occupies 196 to 265 (DPKTVLQEWA…ASAMIVREGV (70 aa)).

The protein belongs to the ribonuclease III family. Homodimer. Requires Mg(2+) as cofactor.

Its subcellular location is the cytoplasm. The enzyme catalyses Endonucleolytic cleavage to 5'-phosphomonoester.. In terms of biological role, digests double-stranded RNA. Involved in the processing of primary rRNA transcript to yield the immediate precursors to the large and small rRNAs (23S and 16S). Processes some mRNAs, and tRNAs when they are encoded in the rRNA operon. Processes pre-crRNA and tracrRNA of type II CRISPR loci if present in the organism. This is Ribonuclease 3 from Nitrobacter winogradskyi (strain ATCC 25391 / DSM 10237 / CIP 104748 / NCIMB 11846 / Nb-255).